A 218-amino-acid chain; its full sequence is Small ribosomal subunit protein uS3c (218 aa).

Residues 39 to 118 (IRNFIKNYVQ…KLNIAITRIA (80 aa)) form the KH type-2 domain.

This sequence belongs to the universal ribosomal protein uS3 family. As to quaternary structure, part of the 30S ribosomal subunit.

The protein localises to the plastid. The protein resides in the chloroplast. The polypeptide is Small ribosomal subunit protein uS3c (rps3) (Ipomoea purpurea (Common morning glory)).